The chain runs to 275 residues: Anamorsin homolog (275 aa).

The interval Met1–Gly147 is N-terminal SAM-like domain. Positions Arg148–Met183 are linker. 4 residues coordinate [2Fe-2S] cluster: Cys203, Cys209, Cys212, and Cys214. A fe-S binding site A region spans residues Cys203 to Cys214. [4Fe-4S] cluster contacts are provided by Cys238, Cys241, Cys249, and Cys252. Short sequence motifs (cx2C motif) lie at residues Cys238–Cys241 and Cys249–Cys252. The segment at Cys238–Cys252 is fe-S binding site B.

It belongs to the anamorsin family. Monomer. The cofactor is [2Fe-2S] cluster. It depends on [4Fe-4S] cluster as a cofactor.

Its subcellular location is the cytoplasm. The protein resides in the mitochondrion intermembrane space. Functionally, component of the cytosolic iron-sulfur (Fe-S) protein assembly (CIA) machinery. Required for the maturation of extramitochondrial Fe-S proteins. Part of an electron transfer chain functioning in an early step of cytosolic Fe-S biogenesis, facilitating the de novo assembly of a [4Fe-4S] cluster on the cytosolic Fe-S scaffold complex. Electrons are transferred from NADPH via a FAD- and FMN-containing diflavin oxidoreductase. Together with the diflavin oxidoreductase, also required for the assembly of the diferric tyrosyl radical cofactor of ribonucleotide reductase (RNR), probably by providing electrons for reduction during radical cofactor maturation in the catalytic small subunit. The protein is Anamorsin homolog of Thalassiosira pseudonana (Marine diatom).